A 299-amino-acid polypeptide reads, in one-letter code: Protease HtpX homolog (299 aa).

Helical transmembrane passes span 5–25 (IFLF…VLSV) and 44–64 (MVAL…MSLA). His-155 provides a ligand contact to Zn(2+). The active site involves Glu-156. His-159 is a binding site for Zn(2+). 2 consecutive transmembrane segments (helical) span residues 170 to 190 (LLQG…AWIA) and 205 to 225 (FIAV…VVFA). Glu-231 is a binding site for Zn(2+).

This sequence belongs to the peptidase M48B family. Zn(2+) serves as cofactor.

It is found in the cell membrane. In Bacillus pumilus (strain SAFR-032), this protein is Protease HtpX homolog.